Consider the following 968-residue polypeptide: RNA polymerase-associated protein RapA (968 aa).

One can recognise a Helicase ATP-binding domain in the interval Asp164–Asn334. ATP is bound at residue Asp177–Thr184. A DEAH box motif is present at residues Asp280–His283. Positions Arg490–Gly662 constitute a Helicase C-terminal domain.

Belongs to the SNF2/RAD54 helicase family. RapA subfamily. Interacts with the RNAP. Has a higher affinity for the core RNAP than for the holoenzyme. Its ATPase activity is stimulated by binding to RNAP.

In terms of biological role, transcription regulator that activates transcription by stimulating RNA polymerase (RNAP) recycling in case of stress conditions such as supercoiled DNA or high salt concentrations. Probably acts by releasing the RNAP, when it is trapped or immobilized on tightly supercoiled DNA. Does not activate transcription on linear DNA. Probably not involved in DNA repair. This chain is RNA polymerase-associated protein RapA, found in Escherichia coli O127:H6 (strain E2348/69 / EPEC).